The primary structure comprises 152 residues: MATEEDVKQRQIIESRARNISHNVRCTECGSQSIEDSQADIAILLRKLIRDEIKSGKSDKEIYKKLQADYGETILYTPKFDLQTAAIWLSPVIVGGVAAGVWAYKKHRQRTNVHIMALNLVRGVPLTPREKETMLDVLTPPPPANKWWWPGK.

The Mitochondrial intermembrane portion of the chain corresponds to 1–83 (MATEEDVKQR…ILYTPKFDLQ (83 aa)). Residues Cys-26 and Cys-29 each contribute to the heme site. A helical membrane pass occupies residues 84 to 104 (TAAIWLSPVIVGGVAAGVWAY). Over 105 to 152 (KKHRQRTNVHIMALNLVRGVPLTPREKETMLDVLTPPPPANKWWWPGK) the chain is Mitochondrial matrix.

It belongs to the CcmH/CycL/Ccl2/NrfF family.

The protein resides in the mitochondrion inner membrane. Plays a role in mitochondrial cytochrome c maturation. Probable component of a heme lyase complex involved in the reduction of apocytochrome c. The chain is Cytochrome c-type biogenesis CcmH-like mitochondrial protein from Oryza sativa subsp. indica (Rice).